A 61-amino-acid polypeptide reads, in one-letter code: Sperm protamine P1 (61 aa).

Residues Met-1–Tyr-61 are disordered.

It belongs to the protamine P1 family. As to expression, testis.

The protein localises to the nucleus. It is found in the chromosome. In terms of biological role, protamines substitute for histones in the chromatin of sperm during the haploid phase of spermatogenesis. They compact sperm DNA into a highly condensed, stable and inactive complex. The protein is Sperm protamine P1 (PRM1) of Notoryctes typhlops (Southern marsupial mole).